Here is a 254-residue protein sequence, read N- to C-terminus: 2-dehydro-3-deoxy-D-gluconate 5-dehydrogenase (254 aa).

The Proton acceptor role is filled by tyrosine 159.

Belongs to the short-chain dehydrogenases/reductases (SDR) family.

The catalysed reaction is 2-dehydro-3-deoxy-D-gluconate + NAD(+) = 3-deoxy-D-glycero-2,5-hexodiulosonate + NADH + H(+). Its function is as follows. Involved in the degradation of 3,6-anhydro-L-galactose, which is the major monomeric sugar of red macroalgae. Catalyzes the fourth step of the pathway, the reduction of 3-deoxy-D-glycero-2,5-hexodiulosonate (L-DDGal) to 2-dehydro-3-deoxy-D-gluconate (KDG). This chain is 2-dehydro-3-deoxy-D-gluconate 5-dehydrogenase, found in Pseudoalteromonas atlantica (strain T6c / ATCC BAA-1087).